A 133-amino-acid polypeptide reads, in one-letter code: ATP synthase epsilon chain, chloroplastic (133 aa).

Belongs to the ATPase epsilon chain family. In terms of assembly, F-type ATPases have 2 components, CF(1) - the catalytic core - and CF(0) - the membrane proton channel. CF(1) has five subunits: alpha(3), beta(3), gamma(1), delta(1), epsilon(1). CF(0) has three main subunits: a, b and c.

The protein resides in the plastid. The protein localises to the chloroplast thylakoid membrane. In terms of biological role, produces ATP from ADP in the presence of a proton gradient across the membrane. In Psilotum nudum (Whisk fern), this protein is ATP synthase epsilon chain, chloroplastic.